We begin with the raw amino-acid sequence, 73 residues long: Small ribosomal subunit protein bS21 (73 aa).

Belongs to the bacterial ribosomal protein bS21 family.

In Parvibaculum lavamentivorans (strain DS-1 / DSM 13023 / NCIMB 13966), this protein is Small ribosomal subunit protein bS21.